A 579-amino-acid chain; its full sequence is Tricyclene synthase 0e23, chloroplastic (579 aa).

A chloroplast-targeting transit peptide spans Met-1–Ser-66. Asn-27, Asn-204, and Asn-317 each carry an N-linked (GlcNAc...) asparagine glycan. Mg(2+) contacts are provided by Asp-336 and Asp-340. Residues Asp-336–Asp-340 carry the DDXXD motif motif. 2 N-linked (GlcNAc...) asparagine glycosylation sites follow: Asn-382 and Asn-463. Residues Asn-480 and Glu-488 each coordinate Mg(2+). The N-linked (GlcNAc...) asparagine glycan is linked to Asn-507.

It belongs to the terpene synthase family. Tpsg subfamily. It depends on Mg(2+) as a cofactor. Mn(2+) is required as a cofactor. In terms of tissue distribution, accumulates in flowers; mostly expressed in both upper and lower petal lobes, and, to a lower extent, in tube and stamens.

The protein localises to the plastid. The protein resides in the chloroplast stroma. The catalysed reaction is (2E)-geranyl diphosphate = tricyclene + diphosphate. The enzyme catalyses (2E)-geranyl diphosphate = (E)-beta-ocimene + diphosphate. Its pathway is secondary metabolite biosynthesis; terpenoid biosynthesis. Functionally, contributes to floral scent emission. The protein is Tricyclene synthase 0e23, chloroplastic (0e23) of Antirrhinum majus (Garden snapdragon).